We begin with the raw amino-acid sequence, 427 residues long: Glutamate-1-semialdehyde 2,1-aminomutase (427 aa).

At lysine 265 the chain carries N6-(pyridoxal phosphate)lysine.

Belongs to the class-III pyridoxal-phosphate-dependent aminotransferase family. HemL subfamily. Homodimer. Pyridoxal 5'-phosphate serves as cofactor.

The protein localises to the cytoplasm. The catalysed reaction is (S)-4-amino-5-oxopentanoate = 5-aminolevulinate. The protein operates within porphyrin-containing compound metabolism; protoporphyrin-IX biosynthesis; 5-aminolevulinate from L-glutamyl-tRNA(Glu): step 2/2. The sequence is that of Glutamate-1-semialdehyde 2,1-aminomutase from Burkholderia pseudomallei (strain 668).